The chain runs to 203 residues: Holliday junction branch migration complex subunit RuvA (203 aa).

The tract at residues 1-65 (MIAYIHGKLL…EDAFDLYGFP (65 aa)) is domain I. The domain II stretch occupies residues 66 to 144 (CFDDREVFRT…TLKSATVRSG (79 aa)). Positions 145–155 (ACPVEGDRSEF) are flexible linker. The interval 155 to 203 (FLDALSGLRNLGYGDDEVRDFLKDIFDEEPDLDAGGAIRVALKKISQNK) is domain III.

The protein belongs to the RuvA family. In terms of assembly, homotetramer. Forms an RuvA(8)-RuvB(12)-Holliday junction (HJ) complex. HJ DNA is sandwiched between 2 RuvA tetramers; dsDNA enters through RuvA and exits via RuvB. An RuvB hexamer assembles on each DNA strand where it exits the tetramer. Each RuvB hexamer is contacted by two RuvA subunits (via domain III) on 2 adjacent RuvB subunits; this complex drives branch migration. In the full resolvosome a probable DNA-RuvA(4)-RuvB(12)-RuvC(2) complex forms which resolves the HJ.

It localises to the cytoplasm. Its function is as follows. The RuvA-RuvB-RuvC complex processes Holliday junction (HJ) DNA during genetic recombination and DNA repair, while the RuvA-RuvB complex plays an important role in the rescue of blocked DNA replication forks via replication fork reversal (RFR). RuvA specifically binds to HJ cruciform DNA, conferring on it an open structure. The RuvB hexamer acts as an ATP-dependent pump, pulling dsDNA into and through the RuvAB complex. HJ branch migration allows RuvC to scan DNA until it finds its consensus sequence, where it cleaves and resolves the cruciform DNA. The polypeptide is Holliday junction branch migration complex subunit RuvA (Maridesulfovibrio salexigens (strain ATCC 14822 / DSM 2638 / NCIMB 8403 / VKM B-1763) (Desulfovibrio salexigens)).